Here is a 115-residue protein sequence, read N- to C-terminus: NAD(P)H-quinone oxidoreductase subunit M (115 aa).

The protein belongs to the complex I NdhM subunit family. As to quaternary structure, NDH-1 can be composed of about 15 different subunits; different subcomplexes with different compositions have been identified which probably have different functions.

Its subcellular location is the cellular thylakoid membrane. It catalyses the reaction a plastoquinone + NADH + (n+1) H(+)(in) = a plastoquinol + NAD(+) + n H(+)(out). It carries out the reaction a plastoquinone + NADPH + (n+1) H(+)(in) = a plastoquinol + NADP(+) + n H(+)(out). In terms of biological role, NDH-1 shuttles electrons from an unknown electron donor, via FMN and iron-sulfur (Fe-S) centers, to quinones in the respiratory and/or the photosynthetic chain. The immediate electron acceptor for the enzyme in this species is believed to be plastoquinone. Couples the redox reaction to proton translocation, and thus conserves the redox energy in a proton gradient. Cyanobacterial NDH-1 also plays a role in inorganic carbon-concentration. The sequence is that of NAD(P)H-quinone oxidoreductase subunit M from Synechococcus sp. (strain WH7803).